Here is a 333-residue protein sequence, read N- to C-terminus: D-lactate dehydrogenase (333 aa).

NAD(+) is bound by residues 156-157, D176, 207-208, N213, 234-236, and D260; these read HI, VP, and VSR. R236 is a catalytic residue. The active site involves E265. The active-site Proton donor is H297.

Belongs to the D-isomer specific 2-hydroxyacid dehydrogenase family. As to quaternary structure, homodimer.

The catalysed reaction is (R)-lactate + NAD(+) = pyruvate + NADH + H(+). In Lactobacillus delbrueckii subsp. bulgaricus (strain ATCC 11842 / DSM 20081 / BCRC 10696 / JCM 1002 / NBRC 13953 / NCIMB 11778 / NCTC 12712 / WDCM 00102 / Lb 14), this protein is D-lactate dehydrogenase (ldhA).